We begin with the raw amino-acid sequence, 135 residues long: PTS system sorbose-specific EIIA component (135 aa).

In terms of domain architecture, PTS EIIA type-4 spans 1–131 (MVHAIFCAHG…CVVWQQPETV (131 aa)). His9 serves as the catalytic Tele-phosphohistidine intermediate. The residue at position 9 (His9) is a Phosphohistidine; by HPr.

The protein resides in the cytoplasm. In terms of biological role, the phosphoenolpyruvate-dependent sugar phosphotransferase system (PTS), a major carbohydrate active transport system, catalyzes the phosphorylation of incoming sugar substrates concomitant with their translocation across the cell membrane. The enzyme II SorABFM PTS system is involved in L-sorbose transport. This is PTS system sorbose-specific EIIA component from Klebsiella pneumoniae.